Here is a 245-residue protein sequence, read N- to C-terminus: MGQKVNPIGLRLGINRTADSRWYADSADFGRLLHEDISIRKAIREKLKQAGISKIIIERPHKKCLITIHTARPGLVIGKKGGDIEVLRKELAKMTSDEVRVNLVEIRKPEIDATLIADDIARQLERRASFRRAMKRSIQSAMRLGAEGVKVVVSGRLGGAEIARTEKYAEGSVPLHTLRADIDYGTAEATTTYGIIGVKVWVYKGEILEHDPMAQDKRLETSGQSRARANTNQRGPASGAQAAGA.

Positions 39-107 (IRKAIREKLK…EVRVNLVEIR (69 aa)) constitute a KH type-2 domain. The interval 216 to 245 (DKRLETSGQSRARANTNQRGPASGAQAAGA) is disordered. Polar residues predominate over residues 221–235 (TSGQSRARANTNQRG).

Belongs to the universal ribosomal protein uS3 family. As to quaternary structure, part of the 30S ribosomal subunit. Forms a tight complex with proteins S10 and S14.

Binds the lower part of the 30S subunit head. Binds mRNA in the 70S ribosome, positioning it for translation. This chain is Small ribosomal subunit protein uS3, found in Hyphomonas neptunium (strain ATCC 15444).